The chain runs to 469 residues: Putative F-box/LRR-repeat protein At5g02930 (469 aa).

The F-box domain occupies 27-77 (VDSISDLPDAVLQHIFSYIPTELAIRTSVLSKRWRHVWSETPHLSFEWLKV). LRR repeat units lie at residues 30–58 (ISDL…VLSK), 178–203 (DCTM…SLKF), 204–214 (CMSLKYLNLSK), 223–250 (IERI…RLRD), 296–321 (TMLK…SLSK), and 341–366 (IIRS…TVYT).

This is Putative F-box/LRR-repeat protein At5g02930 from Arabidopsis thaliana (Mouse-ear cress).